Here is a 142-residue protein sequence, read N- to C-terminus: Nucleoside diphosphate kinase (142 aa).

The ATP site is built by lysine 11, phenylalanine 59, arginine 87, threonine 93, arginine 104, and asparagine 114. Histidine 117 functions as the Pros-phosphohistidine intermediate in the catalytic mechanism.

It belongs to the NDK family. Homotetramer. The cofactor is Mg(2+).

Its subcellular location is the cytoplasm. It catalyses the reaction a 2'-deoxyribonucleoside 5'-diphosphate + ATP = a 2'-deoxyribonucleoside 5'-triphosphate + ADP. It carries out the reaction a ribonucleoside 5'-diphosphate + ATP = a ribonucleoside 5'-triphosphate + ADP. Its function is as follows. Major role in the synthesis of nucleoside triphosphates other than ATP. The ATP gamma phosphate is transferred to the NDP beta phosphate via a ping-pong mechanism, using a phosphorylated active-site intermediate. This Thiobacillus denitrificans (strain ATCC 25259 / T1) protein is Nucleoside diphosphate kinase.